The chain runs to 245 residues: Rhamnogalacturonan acetylesterase (245 aa).

The first 17 residues, 1–17, serve as a signal peptide directing secretion; sequence MKSIALTSLSLLPSALA. Ser-26 (nucleophile) is an active-site residue. Residues Cys-100 and Cys-108 are joined by a disulfide bond. Active-site residues include Asp-204 and His-207. Cys-226 and Cys-244 are oxidised to a cystine.

The protein belongs to the 'GDSL' lipolytic enzyme family.

It localises to the secreted. It catalyses the reaction Hydrolytic cleavage of 2-O-acetyl- or 3-O-acetyl groups of alpha-D-galacturonic acid in rhamnogalacturonan I.. Functionally, plays a key role in the degradation of rhamnogalacturonan in the cell wall. Involved in degradation of pectin. The polypeptide is Rhamnogalacturonan acetylesterase (Emericella nidulans (strain FGSC A4 / ATCC 38163 / CBS 112.46 / NRRL 194 / M139) (Aspergillus nidulans)).